A 443-amino-acid chain; its full sequence is 3-phosphoshikimate 1-carboxyvinyltransferase (443 aa).

Residues 1–25 (MSHSAEPLPMTARRSGPLTGEAQVP) form a disordered region. 3 residues coordinate 3-phosphoshikimate: Lys28, Ser29, and Arg33. Lys28 provides a ligand contact to phosphoenolpyruvate. Gly101 and Arg129 together coordinate phosphoenolpyruvate. 3-phosphoshikimate-binding residues include Ser174, Gln176, Asp326, and Lys353. A phosphoenolpyruvate-binding site is contributed by Gln176. Asp326 (proton acceptor) is an active-site residue. 2 residues coordinate phosphoenolpyruvate: Arg357 and Arg400.

Belongs to the EPSP synthase family. In terms of assembly, monomer.

The protein resides in the cytoplasm. The catalysed reaction is 3-phosphoshikimate + phosphoenolpyruvate = 5-O-(1-carboxyvinyl)-3-phosphoshikimate + phosphate. The protein operates within metabolic intermediate biosynthesis; chorismate biosynthesis; chorismate from D-erythrose 4-phosphate and phosphoenolpyruvate: step 6/7. Functionally, catalyzes the transfer of the enolpyruvyl moiety of phosphoenolpyruvate (PEP) to the 5-hydroxyl of shikimate-3-phosphate (S3P) to produce enolpyruvyl shikimate-3-phosphate and inorganic phosphate. The protein is 3-phosphoshikimate 1-carboxyvinyltransferase of Paracoccus denitrificans (strain Pd 1222).